A 116-amino-acid polypeptide reads, in one-letter code: uncharacterized protein (116 aa).

The disordered stretch occupies residues 77 to 116 (SATSHYPKADDPQRFARSVSRGPSRVRRPARNSASRPVRR).

This is an uncharacterized protein from Frog virus 3 (isolate Goorha) (FV-3).